Reading from the N-terminus, the 559-residue chain is Nucleoprotein (559 aa).

The interval 53–235 is binding site for the cap structure m7GTP; the sequence is MRKEKRTDSD…ITQEQSQINI (183 aa). 2 residues coordinate Mn(2+): Asp378 and Glu380. Positions 388, 495, 498, and 519 each coordinate Zn(2+). A Mn(2+)-binding site is contributed by Asp523.

Belongs to the arenaviridae nucleocapsid protein family. In terms of assembly, homomultimerizes to form the nucleocapsid. Binds to viral genomic RNA. Interacts with glycoprotein G2. Interacts with protein Z; this interaction probably directs the encapsidated genome to budding sites. Interacts with protein L; this interaction does not interfere with Z-L interaction. Interacts with host IKBKE (via Protein kinase domain); the interaction inhibits IKBKE kinase activity.

The protein localises to the virion. The protein resides in the host cytoplasm. Encapsidates the genome, protecting it from nucleases. The encapsidated genomic RNA is termed the nucleocapsid (NC). Serves as template for viral transcription and replication. The increased presence of protein N in host cell does not seem to trigger the switch from transcription to replication as observed in other negative strain RNA viruses. Through the interaction with host IKBKE, strongly inhibits the phosphorylation and nuclear translocation of host IRF3, a protein involved in interferon activation pathway, leading to the inhibition of interferon-beta and IRF3-dependent promoters activation. Also encodes a functional 3'-5' exoribonuclease that degrades preferentially dsRNA substrates and thereby participates in the suppression of interferon induction. The protein is Nucleoprotein of Sooretamys angouya (Paraguayan rice rat).